The sequence spans 201 residues: MICOS complex subunit MIC27 (201 aa).

The N-terminal 31 residues, 1–31 (MTQDKPIVETISNAGEQVTNVFGQFWQLVTS), are a transit peptide targeting the mitochondrion. Residues 32-117 (KNTTNNGDSK…KCNAYLTEEW (86 aa)) lie on the Cytoplasmic side of the membrane. Residues 118-138 (TALPKAAAITVGGMAGFVLGL) form a helical membrane-spanning segment. Residues 139–145 (KRGPVGR) lie on the Mitochondrial intermembrane side of the membrane. A helical membrane pass occupies residues 146–166 (LLTTTIGLATMAAFCYPIEAV). Topologically, residues 167 to 201 (DVAKTGRAHAEQTWYSFQESPTPSAIVKTNLSPPK) are cytoplasmic.

Belongs to the apolipoprotein O/MICOS complex subunit Mic27 family. As to quaternary structure, component of the mitochondrial contact site and cristae organizing system (MICOS) complex.

It localises to the mitochondrion outer membrane. Sustains mitochondrial morphology probably through maintaining cristae morphology. May act as a component of the MICOS complex, a large protein complex of the mitochondria. The sequence is that of MICOS complex subunit MIC27 from Caenorhabditis elegans.